Here is a 457-residue protein sequence, read N- to C-terminus: Streptogrisin-C (457 aa).

A signal peptide (tat-type signal) is located at residues 1 to 34; that stretch reads MERTTLRRRALVAGTATVAVGALALAGLTGVASA. Residues 35 to 202 constitute a propeptide that is removed on maturation; that stretch reads DPAATAAPPV…ARSAEQPRAL (168 aa). Residues 203–393 form a catalytic region; it reads ADIRGGDAYY…QAYGLTLVTS (191 aa). Residues Cys219 and Cys239 are joined by a disulfide bond. Residues His238 and Asp266 each act as charge relay system in the active site. 2 disulfide bridges follow: Cys305-Cys315 and Cys341-Cys368. The active-site Charge relay system is Ser347. Residues 393–412 are disordered; it reads SGGGTPTDPPTTPPTDSPGG. Residues 394-413 form a linker region; sequence GGGTPTDPPTTPPTDSPGGT. Residues 399–408 are compositionally biased toward pro residues; sequence TDPPTTPPTD. The Chitin-binding type-3 domain occupies 415-457; it reads AVGTAYAAGATVTYGGATYRCLQAHTAQPGWTPADVPALWQRV.

It belongs to the peptidase S1 family. As to quaternary structure, monomer. Predicted to be exported by the Tat system. The position of the signal peptide cleavage has not been experimentally proven.

Hydrolysis of proteins with specificity similar to chymotrypsin. May be specialized for the degradation of chitin-linked proteins. Has a primary specificity for large aliphatic or aromatic amino acids. The polypeptide is Streptogrisin-C (sprC) (Streptomyces griseus).